Reading from the N-terminus, the 341-residue chain is 4-hydroxythreonine-4-phosphate dehydrogenase (341 aa).

Thr126 contacts substrate. The a divalent metal cation site is built by His161, His206, and His272. Residues Lys280, Asn289, and Arg298 each coordinate substrate.

This sequence belongs to the PdxA family. As to quaternary structure, homodimer. It depends on a divalent metal cation as a cofactor.

Its subcellular location is the cytoplasm. It carries out the reaction 4-(phosphooxy)-L-threonine + NAD(+) = 3-amino-2-oxopropyl phosphate + CO2 + NADH. It participates in cofactor biosynthesis; pyridoxine 5'-phosphate biosynthesis; pyridoxine 5'-phosphate from D-erythrose 4-phosphate: step 4/5. Its function is as follows. Catalyzes the NAD(P)-dependent oxidation of 4-(phosphooxy)-L-threonine (HTP) into 2-amino-3-oxo-4-(phosphooxy)butyric acid which spontaneously decarboxylates to form 3-amino-2-oxopropyl phosphate (AHAP). The protein is 4-hydroxythreonine-4-phosphate dehydrogenase of Thermosynechococcus vestitus (strain NIES-2133 / IAM M-273 / BP-1).